The sequence spans 702 residues: Vacuolar protein sorting-associated protein 52 homolog (702 aa).

A coiled-coil region spans residues 505–535 (KEMGAKMEAVLENSEDSIEQLLTRMSAMQQT).

The protein belongs to the VPS52 family. Component of the Golgi-associated retrograde protein (GARP) complex, also called VFT (VPS fifty-three) complex, composed of vps-51, vps-52, vps-53 and vps-54. Within the complex interacts with vps-53 and vps-54. Interacts with the small GTPases rab-6.1 and rab-6.2. As to expression, ubiquitously expressed, with particularly strong expression in neuronal cells. Specifically expressed in head and tail neurons and in the pharynx and ventral cord motor neurons.

It localises to the golgi apparatus. It is found in the trans-Golgi network. Its subcellular location is the perikaryon. The protein localises to the cytoplasm. The protein resides in the perinuclear region. Its function is as follows. Acts as a component of the GARP complex that is involved in retrograde transport from early and late endosomes to the trans-Golgi network (TGN). The GARP complex facilitates tethering as well as SNARE complex assembly at the Golgi. Plays a role in the trafficking of cargo to dense-core vesicles, probably through association with the EARP-interacting protein eipr-1. Important for neuronal function. In Caenorhabditis elegans, this protein is Vacuolar protein sorting-associated protein 52 homolog.